The following is a 156-amino-acid chain: Protein-export protein SecB (156 aa).

This sequence belongs to the SecB family. As to quaternary structure, homotetramer, a dimer of dimers. One homotetramer interacts with 1 SecA dimer.

The protein localises to the cytoplasm. One of the proteins required for the normal export of preproteins out of the cell cytoplasm. It is a molecular chaperone that binds to a subset of precursor proteins, maintaining them in a translocation-competent state. It also specifically binds to its receptor SecA. This is Protein-export protein SecB from Aliivibrio fischeri (strain ATCC 700601 / ES114) (Vibrio fischeri).